Reading from the N-terminus, the 885-residue chain is Insulin receptor substrate 1-A (885 aa).

The IRS-type PTB domain occupies 1–56 (MNIRRCGHSENFFFIEVGRSAVTGAGEFWMQVDDSVVAQNMHETILEAMKALSDEF). The segment at 56 to 225 (FRPRSKSQSS…GGFISSDEYG (170 aa)) is disordered. 4 stretches are compositionally biased toward low complexity: residues 61-75 (KSQS…ISVP), 99-109 (SATATSPAGGA), 176-197 (SPSA…GSTS), and 205-217 (SSAS…SDGG). At serine 104 the chain carries Phosphoserine. Tyrosine 257 carries the phosphotyrosine; by INSR modification. A YXXM motif 1 motif is present at residues 257–260 (YICM). Composition is skewed to polar residues over residues 263-276 (SSSH…QRYQ) and 296-313 (SSGT…PSQS). 2 disordered regions span residues 263–282 (SSSH…RGEE) and 293–313 (RTHS…PSQS). 5 consecutive short sequence motifs (YXXM motif) follow at residues 318–321 (YTEM), 364–367 (YMPM), 381–384 (YMPM), 409–412 (YMMM), and 451–454 (YINM). A phosphotyrosine; by INSR mark is found at tyrosine 364 and tyrosine 381. Tyrosine 409 bears the Phosphotyrosine mark. The tract at residues 501 to 581 (NLRISANSGH…LPPEPKSPGE (81 aa)) is disordered. Residues 504–515 (ISANSGHNLYTE) are compositionally biased toward polar residues. Over residues 516-526 (DSSSSSTSSDS) the composition is skewed to low complexity. Residues tyrosine 582 and tyrosine 620 each carry the phosphotyrosine; by INSR modification. Residues 582–584 (YVN) are GRB2-binding. Positions 620–623 (YMNM) match the YXXM motif 7 motif. Residues 637–660 (TSSYEPPNKPVNSVCPTETCSSSR) show a composition bias toward polar residues. The disordered stretch occupies residues 637 to 665 (TSSYEPPNKPVNSVCPTETCSSSRPPIRG). Tyrosine 672 bears the Phosphotyrosine; by INSR mark. 2 consecutive short sequence motifs (YXXM motif) follow at residues 672–675 (YMSM) and 706–709 (YAEM). Residues 732 to 803 (ASRSSLLGQG…SGEDVKRHSS (72 aa)) are disordered. Polar residues-rich tracts occupy residues 743-758 (GPSA…NRNP) and 777-792 (ETFS…TTGP). Phosphotyrosine; by INSR occurs at positions 834 and 866.

As to quaternary structure, interacts with the NPXY motif of tyrosine-phosphorylated igf1r and insr via the PTB domain. Binds to phosphatidylinositol 3-kinase p85 subunit at a low level in vitro prior to phosphorylation. Binding is greatly enhanced following tyrosine phosphorylation by insr and probably occurs via the phosphorylated YXXM motifs. Post-translationally, phosphorylation of Tyr-582 is required for grb2-binding.

In terms of biological role, may mediate the control of various cellular processes by insulin. When phosphorylated by the insulin receptor binds specifically to various cellular proteins containing SH2 domains such as phosphatidylinositol 3-kinase p85 subunit or grb2. Activates phosphatidylinositol 3-kinase when bound to the regulatory p85 subunit. The polypeptide is Insulin receptor substrate 1-A (irs1-a) (Xenopus laevis (African clawed frog)).